The sequence spans 86 residues: High affinity immunoglobulin epsilon receptor subunit gamma (86 aa).

A signal peptide spans 1-18 (MIPAVILFLLLLVEEAAA). Residues 19–23 (LGEPQ) lie on the Extracellular side of the membrane. Residues 24–44 (LCYILDAILFLYGIVLTLLYC) form a helical membrane-spanning segment. Residues 45–86 (RLKIQVRKADIASREKSDAVYTGLNTRNQETYETLKHEKPPQ) are Cytoplasmic-facing. Residues 54–82 (DIASREKSDAVYTGLNTRNQETYETLKHE) form the ITAM domain. Y65 and Y76 each carry phosphotyrosine. Phosphothreonine is present on T78.

It belongs to the CD3Z/FCER1G family. IgE Fc receptor is a tetramer of an alpha chain, a beta chain, and two disulfide linked gamma chains. Associates with FCGR1A to form a functional receptor complex. The signaling subunit of immunoglobulin gamma (IgG) Fc receptor complex. As a homodimer or a heterodimer of CD247 and FCER1G, associates with the ligand binding subunit FCGR3A to form a functional receptor complex. Associates with CLEC6A. Interacts with CLEC4E. Interacts (via ITAM domain) with SYK (via SH2 domains); activates SYK, enabling integrin-mediated activation of neutrophils and macrophages. Interacts with common beta chain of interleukin 3 receptor CSF2RB and recruits SYK in response to IL3 stimulation; this interaction is direct. Interacts with CD300LH; the interaction may be indirect. Interacts with CD300LD. Interacts with TARM1. As to expression, expressed in leukocytes and pinealocytes. Expression in the pineal gland does not undergo circadian variations.

It is found in the cell membrane. Its function is as follows. Adapter protein containing an immunoreceptor tyrosine-based activation motif (ITAM) that transduces activation signals from various immunoreceptors. As a component of the high-affinity immunoglobulin E (IgE) receptor, mediates allergic inflammatory signaling in mast cells. As a constitutive component of interleukin-3 receptor complex, selectively mediates interleukin 4/IL4 production by basophils priming T-cells toward effector T-helper 2 subset. Associates with pattern recognition receptors CLEC4D and CLEC4E to form a functional signaling complex in myeloid cells. Binding of mycobacterial trehalose 6,6'-dimycolate (TDM) to this receptor complex leads to phosphorylation of ITAM, triggering activation of SYK, CARD9 and NF-kappa-B, consequently driving maturation of antigen-presenting cells and shaping antigen-specific priming of T-cells toward effector T-helper 1 and T-helper 17 cell subtypes. May function cooperatively with other activating receptors. Functionally linked to integrin beta-2/ITGB2-mediated neutrophil activation. Also involved in integrin alpha-2/ITGA2-mediated platelet activation. In Rattus norvegicus (Rat), this protein is High affinity immunoglobulin epsilon receptor subunit gamma (Fcer1g).